The chain runs to 498 residues: Ribose import ATP-binding protein RbsA (498 aa).

ABC transporter domains are found at residues 2-237 (LALQ…VGRD) and 247-491 (VTPG…TGQQ). An ATP-binding site is contributed by 34–41 (GENGAGKS).

Belongs to the ABC transporter superfamily. Ribose importer (TC 3.A.1.2.1) family. As to quaternary structure, the complex is composed of an ATP-binding protein (RbsA), two transmembrane proteins (RbsC) and a solute-binding protein (RbsB).

The protein localises to the cell membrane. The catalysed reaction is D-ribose(out) + ATP + H2O = D-ribose(in) + ADP + phosphate + H(+). Its function is as follows. Part of the ABC transporter complex RbsABC involved in ribose import. Responsible for energy coupling to the transport system. This is Ribose import ATP-binding protein RbsA from Deinococcus geothermalis (strain DSM 11300 / CIP 105573 / AG-3a).